A 607-amino-acid polypeptide reads, in one-letter code: Large ribosomal subunit assembly factor BipA (607 aa).

Positions Glu3–Asp198 constitute a tr-type G domain. GTP contacts are provided by residues Asp15 to Thr20 and Asn128 to Asp131. The segment at Gly481–Glu607 is C-terminal domain (CTD), required but not sufficient to bind 70S or 30S ribosomes.

This sequence belongs to the TRAFAC class translation factor GTPase superfamily. Classic translation factor GTPase family. BipA subfamily. As to quaternary structure, monomer.

The protein resides in the cytoplasm. The catalysed reaction is GTP + H2O = GDP + phosphate + H(+). Its activity is regulated as follows. Ribosome-associated GTPase is not affected by low levels of ppGpp, &gt;40 uM ppGpp and &gt;50 uM GDP inhibit GTPase. The C-terminus (residues 387-607 or 481-607) inhibits GTPase activity, in its absence kcat increases, but GTPase is no longer stimulated by 70S ribosome or 30S or 50S subunits. Its function is as follows. A 50S ribosomal subunit assembly protein with GTPase activity, required for 50S subunit assembly at low temperatures, may also play a role in translation. Binds GTP and analogs. Binds the 70S ribosome between the 30S and 50S subunits, in a similar position as ribosome-bound EF-G; it contacts a number of ribosomal proteins, both rRNAs and the A-site tRNA. A ribosome-stimulated GTPase, GTPase activity increases 4 fold in the presence of 70S ribosomes. Binds 70S ribosomes in the presence of GTP or its non-hydrolyzable analog GMPPNP; in the presence of ppGpp or under stress conditions it binds to 30S ribosomal subunits. This Salmonella typhimurium (strain LT2 / SGSC1412 / ATCC 700720) protein is Large ribosomal subunit assembly factor BipA.